The following is a 301-amino-acid chain: Homoserine kinase (301 aa).

ATP is bound at residue 89-99 (KPGSGLGSSSA).

It belongs to the GHMP kinase family. Homoserine kinase subfamily.

The protein resides in the cytoplasm. The catalysed reaction is L-homoserine + ATP = O-phospho-L-homoserine + ADP + H(+). It participates in amino-acid biosynthesis; L-threonine biosynthesis; L-threonine from L-aspartate: step 4/5. Its function is as follows. Catalyzes the ATP-dependent phosphorylation of L-homoserine to L-homoserine phosphate. The protein is Homoserine kinase of Methanococcus maripaludis (strain DSM 14266 / JCM 13030 / NBRC 101832 / S2 / LL).